A 316-amino-acid chain; its full sequence is L-lactate dehydrogenase (316 aa).

Residues 13–15 (GMI), 34–36 (FDI), Tyr-67, and 79–83 (TAGFT) each bind NAD(+). Arg-95 is a binding site for substrate. NAD(+) contacts are provided by residues 125-127 (VTN), Leu-150, and Leu-154. 2 residues coordinate substrate: Arg-158 and His-182. NAD(+) is bound at residue His-182. Catalysis depends on His-182, which acts as the Proton acceptor.

The protein belongs to the LDH/MDH superfamily. LDH family. As to quaternary structure, homotetramer.

The catalysed reaction is (S)-lactate + NAD(+) = pyruvate + NADH + H(+). Its pathway is fermentation; pyruvate fermentation to lactate; (S)-lactate from pyruvate: step 1/1. In Plasmodium berghei, this protein is L-lactate dehydrogenase.